The chain runs to 882 residues: Valine--tRNA ligase (882 aa).

Residues 45–55 (PNVTGKLHLGH) carry the 'HIGH' region motif. Positions 519 to 523 (KMSKS) match the 'KMSKS' region motif. K522 is an ATP binding site. Residues 808–882 (LADLLNVEEE…RIAEMKKIKS (75 aa)) are a coiled coil.

The protein belongs to the class-I aminoacyl-tRNA synthetase family. ValS type 1 subfamily. In terms of assembly, monomer.

It localises to the cytoplasm. The catalysed reaction is tRNA(Val) + L-valine + ATP = L-valyl-tRNA(Val) + AMP + diphosphate. Its function is as follows. Catalyzes the attachment of valine to tRNA(Val). As ValRS can inadvertently accommodate and process structurally similar amino acids such as threonine, to avoid such errors, it has a 'posttransfer' editing activity that hydrolyzes mischarged Thr-tRNA(Val) in a tRNA-dependent manner. The polypeptide is Valine--tRNA ligase (Streptococcus pyogenes serotype M1).